The sequence spans 942 residues: Protein O-mannosyl-transferase TMTC1 (942 aa).

At 1 to 20 (MLVTRGDRGGGERAPSRRPR) the chain is on the cytoplasmic side. The helical transmembrane segment at 21–41 (CGLVPAGAAALLAGASCLCYG) threads the bilayer. Residues 42–109 (RSLRGEFVHD…RLNIFLTGMN (68 aa)) lie on the Extracellular side of the membrane. The helical transmembrane segment at 110-130 (PFYFHAVNVILHCLVTLVLMY) threads the bilayer. Residues 131 to 140 (TCDKTVFKNR) lie on the Cytoplasmic side of the membrane. A helical transmembrane segment spans residues 141–157 (GLAFVTALLFAVHPVHT). The Extracellular portion of the chain corresponds to 158 to 159 (EA). Residues 160-180 (VAGIVGRADVLACLLFLLAFL) traverse the membrane as a helical segment. The Cytoplasmic segment spans residues 181-196 (SYQRSLDQGCAGQCFP). Residues 197–217 (TTASPFFLLLSLFLGTCAMLV) form a helical membrane-spanning segment. At 218 to 331 (KETGITVFGV…LLTLRPFLKR (114 aa)) the chain is on the extracellular side. Positions 245-285 (NGAVCQHSSGQPGSPQPSSQQAHPHRESRKQRFPHKDSWGG) are disordered. Positions 250-266 (QHSSGQPGSPQPSSQQA) are enriched in low complexity. Residues 332–352 (AILVISYVTVILYFRLWIMGG) form a helical membrane-spanning segment. At 353 to 373 (TMPLFSEQDNPASFSPYILTR) the chain is on the cytoplasmic side. The chain crosses the membrane as a helical span at residues 374-394 (FLTYSYLLAFNVWLLLAPITL). Over 395–414 (CYDWQVGSIPLVETIWDVRN) the chain is Extracellular. A helical membrane pass occupies residues 415–435 (LATILLAVVMALLSLHCVAAF). Over 436–441 (KRLEHK) the chain is Cytoplasmic. The chain crosses the membrane as a helical span at residues 442–462 (EVLAGLLFLVFPFIPASNLFF). Position 463 (Arg463) is a topological domain, extracellular. The helical transmembrane segment at 464 to 484 (VGFVVAERVLYMPSMGYCILF) threads the bilayer. Over 485–498 (VHGLSKLCAGLSRC) the chain is Cytoplasmic. The chain crosses the membrane as a helical span at residues 499–519 (GATSLMASTVLLLLLFSWKTV). Topologically, residues 520 to 942 (KQNEIWLSRE…LQEVRERDQT (423 aa)) are extracellular. 11 TPR repeats span residues 543 to 576 (AKVH…YPRH), 577 to 607 (ASAL…HPQH), 608 to 641 (NRAL…GPDF), 642 to 675 (ADAY…CPDS), 676 to 709 (SDLH…SPSH), 710 to 742 (HVAV…VART), 743 to 776 (AEVL…QPSQ), 777 to 810 (RELR…EPRC), 811 to 844 (LECY…KPKD), 849 to 882 (SELF…DPDQ), and 883 to 916 (AQAW…VPDS).

It belongs to the TMTC family. May interact with FAM168B.

Its subcellular location is the membrane. It is found in the endoplasmic reticulum. It carries out the reaction a di-trans,poly-cis-dolichyl beta-D-mannosyl phosphate + L-seryl-[protein] = 3-O-(alpha-D-mannosyl)-L-seryl-[protein] + a di-trans,poly-cis-dolichyl phosphate + H(+). The catalysed reaction is a di-trans,poly-cis-dolichyl beta-D-mannosyl phosphate + L-threonyl-[protein] = 3-O-(alpha-D-mannosyl)-L-threonyl-[protein] + a di-trans,poly-cis-dolichyl phosphate + H(+). Its pathway is protein modification; protein glycosylation. Its function is as follows. Transfers mannosyl residues to the hydroxyl group of serine or threonine residues. The 4 members of the TMTC family are O-mannosyl-transferases dedicated primarily to the cadherin superfamily, each member seems to have a distinct role in decorating the cadherin domains with O-linked mannose glycans at specific regions. Also acts as O-mannosyl-transferase on other proteins such as PDIA3. This chain is Protein O-mannosyl-transferase TMTC1, found in Mus musculus (Mouse).